Consider the following 300-residue polypeptide: Cation-efflux pump FieF (300 aa).

4 helical membrane passes run A12–W32, L40–V60, A82–F102, and P114–F134. 2 residues coordinate Zn(2+): D45 and D49. 2 residues coordinate Zn(2+): H153 and D157. The next 2 helical transmembrane spans lie at Q155 to F175 and A178 to G198.

Belongs to the cation diffusion facilitator (CDF) transporter (TC 2.A.4) family. FieF subfamily. Homodimer.

The protein localises to the cell inner membrane. It carries out the reaction Zn(2+)(in) + H(+)(out) = Zn(2+)(out) + H(+)(in). The enzyme catalyses Cd(2+)(in) + H(+)(out) = Cd(2+)(out) + H(+)(in). It catalyses the reaction Fe(2+)(in) + H(+)(out) = Fe(2+)(out) + H(+)(in). In terms of biological role, divalent metal cation transporter which exports Zn(2+), Cd(2+) and possibly Fe(2+). May be involved in zinc and iron detoxification by efflux. This is Cation-efflux pump FieF from Yersinia pestis bv. Antiqua (strain Antiqua).